A 199-amino-acid polypeptide reads, in one-letter code: ORF1/1 protein (199 aa).

The disordered stretch occupies residues 96–155 (ESDALTLSPVHRPKRPKRDTQVKEKTPEKDSDSAVQLRRLQPWIHSSQETKDEEEEIPEG). The span at 113-127 (RDTQVKEKTPEKDSD) shows a compositional bias: basic and acidic residues.

The sequence is that of ORF1/1 protein from Torque teno virus (isolate Human/Finland/Hel32/2002) (TTV).